Here is a 385-residue protein sequence, read N- to C-terminus: Nonsense-mediated mRNA decay factor SMG9 (385 aa).

Positions 1 to 32 (MKKVEILKTSRPSSAGGAARPSTASPTHGAPK) are disordered.

It belongs to the SMG9 family.

Its function is as follows. Involved in nonsense-mediated decay (NMD) of mRNAs containing premature stop codons. Probable component of kinase complex containing smg-1 and recruited to stalled ribosomes. This chain is Nonsense-mediated mRNA decay factor SMG9 (smg-9), found in Caenorhabditis elegans.